We begin with the raw amino-acid sequence, 310 residues long: Protein-L-isoaspartate O-methyltransferase (310 aa).

The segment at 1–41 is disordered; that stretch reads MSGERAKRFPLALEDLKRAPRKSEGRPGERQTAGAVPKAAD. Basic and acidic residues predominate over residues 14 to 29; sequence EDLKRAPRKSEGRPGE. Ser157 is an active-site residue.

It belongs to the methyltransferase superfamily. L-isoaspartyl/D-aspartyl protein methyltransferase family.

It localises to the cytoplasm. It catalyses the reaction [protein]-L-isoaspartate + S-adenosyl-L-methionine = [protein]-L-isoaspartate alpha-methyl ester + S-adenosyl-L-homocysteine. Functionally, catalyzes the methyl esterification of L-isoaspartyl residues in peptides and proteins that result from spontaneous decomposition of normal L-aspartyl and L-asparaginyl residues. It plays a role in the repair and/or degradation of damaged proteins. This chain is Protein-L-isoaspartate O-methyltransferase, found in Burkholderia cenocepacia (strain HI2424).